The sequence spans 625 residues: Arginine--tRNA ligase (625 aa).

Residues 117–127 (ANPIHPLHIGH) carry the 'HIGH' region motif.

This sequence belongs to the class-I aminoacyl-tRNA synthetase family.

The protein localises to the cytoplasm. It carries out the reaction tRNA(Arg) + L-arginine + ATP = L-arginyl-tRNA(Arg) + AMP + diphosphate. This chain is Arginine--tRNA ligase, found in Saccharolobus solfataricus (strain ATCC 35092 / DSM 1617 / JCM 11322 / P2) (Sulfolobus solfataricus).